A 488-amino-acid chain; its full sequence is Mannosylglycerate hydrolase MGH1 (488 aa).

Residues Tyr94, 98–101 (WNWD), Tyr146, Gln167, and Gly227 each bind substrate. Asp229 (proton donor) is an active-site residue. Substrate contacts are provided by residues Arg262 and 415–416 (YW). Residue Glu459 is the Proton acceptor of the active site.

Belongs to the glycosyl hydrolase 63 family.

It catalyses the reaction (2R)-2-O-(alpha-D-mannosyl)-glycerate + H2O = D-mannose + (R)-glycerate. The catalysed reaction is (2R)-2-O-(alpha-D-glucopyranosyl)-glycerate + H2O = (R)-glycerate + D-glucose. With respect to regulation, activity is not dependent on divalent cations, but it is enhanced by Mn(2+). In terms of biological role, catalyzes the hydrolysis of alpha-D-mannosyl-glycerate (MG) to D-glycerate and D-mannose. Can also hydrolyze alpha-D-glucopyranosyl-glycerate (GG)with lower efficiency. The sequence is that of Mannosylglycerate hydrolase MGH1 from Selaginella moellendorffii (Spikemoss).